The sequence spans 355 residues: Daphnetin O-methyltransferase 1 (355 aa).

Residues Asp222, Asp242, and Lys256 each contribute to the S-adenosyl-L-homocysteine site. Catalysis depends on His260, which acts as the Proton acceptor.

Belongs to the class I-like SAM-binding methyltransferase superfamily. Cation-independent O-methyltransferase family. COMT subfamily.

The enzyme catalyses 7,8-dihydroxycoumarin + S-adenosyl-L-methionine = 7-hydroxy-8-methoxycoumarin + S-adenosyl-L-homocysteine + H(+). It participates in aromatic compound metabolism. Its pathway is secondary metabolite biosynthesis. O-methyltransferase involved in the biosynthesis of coumarins natural products such as daphnetin derivatives. Catalyzes specifically the methylation of daphnetin (7,8-dihydroxycoumarin) to produce hydrangetin (7-hydroxy-8-methoxycoumarin). Probably involved in acclimation to low temperature conditions. The sequence is that of Daphnetin O-methyltransferase 1 from Secale cereale (Rye).